Here is a 702-residue protein sequence, read N- to C-terminus: MSRTTPISRYRNIGISAHIDAGKTTTTERILFYTGINHKIGEVHDGAATMDWMEQEQERGITITSAATTTFWSGMAKQFKPHRINIIDTPGHVDFTIEVERSMRVLDGAVMVYCAVGGVQPQSETVWRQANKYNVPRIAFVNKMDRMGANFLKVVKQIKIRLGANPVPLQLAIGAEDTFVGVVDLIKMKAVHWKDSDQGVTFVYNDIPPEMIELSKKWNQNLIESAVESNEDLLEKYLNGDRLSESEIKSALRKRALNNEIVLITCGSAFKNKGVQALLDAIIEFLPAPNDIQDIKGILNDVEQTPAIRNSDDKAPFSALAFKIASDPFVGNLTFFRVYSGVVKSGDTVFNSAKSQRERFGRIVQMHANKREEIKEVYAGDIAAAIGLKDVTTGDTLCDLNDPIILERMEFPEPVISISVEPKTKVDQEKMGLALGRLAKEDPSFRVRTDQESNQTIISGMGELHLEIIIDRMKREFSVDANVGKPQVAYRETILNKVEDIEGKHIKQSGGRGQYGHVVIELFPLQPGGEGYLFVNDIKGGVIPSEYISAIDKGIQEQLKCGPLAGYPVVDIGVRLYFGSYHDVDSSELAFKLAASAAFKKGFKQAKPILLEPIMKVEVETPDDYMGDVIGDLNRRRGIIEGMKDLSISKIINACVPLSEMFGYATDLRSQTQGRASYSMEFLKYIEAPFNISKDIIERREK.

Residues 8 to 290 (SRYRNIGISA…AIIEFLPAPN (283 aa)) enclose the tr-type G domain. Residues 17–24 (AHIDAGKT), 88–92 (DTPGH), and 142–145 (NKMD) contribute to the GTP site.

It belongs to the TRAFAC class translation factor GTPase superfamily. Classic translation factor GTPase family. EF-G/EF-2 subfamily.

It localises to the cytoplasm. Its function is as follows. Catalyzes the GTP-dependent ribosomal translocation step during translation elongation. During this step, the ribosome changes from the pre-translocational (PRE) to the post-translocational (POST) state as the newly formed A-site-bound peptidyl-tRNA and P-site-bound deacylated tRNA move to the P and E sites, respectively. Catalyzes the coordinated movement of the two tRNA molecules, the mRNA and conformational changes in the ribosome. This chain is Elongation factor G, found in Buchnera aphidicola subsp. Acyrthosiphon pisum (strain 5A).